The following is a 175-amino-acid chain: Nudix hydrolase 25 (175 aa).

In terms of domain architecture, Nudix hydrolase spans 7 to 155 (GYRPNVGVCL…KRPTYEEVIK (149 aa)). Glycine 40, glutamate 55, and glutamate 59 together coordinate Mn(2+). The Nudix box signature appears at 40-61 (GGIEDGEDPKSAAMRELQEETG).

Belongs to the Nudix hydrolase family. The cofactor is Mn(2+).

The catalysed reaction is P(1),P(4)-bis(5'-guanosyl) tetraphosphate + H2O = GMP + GTP + 2 H(+). Mediates the hydrolysis of diadenosine 5',5''-P(1)P(4) tetraphosphate (Ap(4)A), a signaling molecule involved in regulation of DNA replication and repair. The sequence is that of Nudix hydrolase 25 from Arabidopsis thaliana (Mouse-ear cress).